The sequence spans 455 residues: Chromosomal replication initiator protein DnaA (455 aa).

A domain I, interacts with DnaA modulators region spans residues 1–75 (MDTNNNIEKE…EILSQNKVGM (75 aa)). A domain II region spans residues 75–106 (MHLAHSVDVRIEVAPKIQINAQANINYKAIKT). Residues 107-321 (SVKDSYTFEN…GAIIKISVNA (215 aa)) form a domain III, AAA+ region region. Residues Gly151, Gly153, Lys154, and Thr155 each contribute to the ATP site. The segment at 322–455 (NLMNAPIDLN…DKKTAFNSSE (134 aa)) is domain IV, binds dsDNA.

The protein belongs to the DnaA family. In terms of assembly, oligomerizes as a right-handed, spiral filament on DNA at oriC.

The protein resides in the cytoplasm. In terms of biological role, plays an essential role in the initiation and regulation of chromosomal replication. ATP-DnaA binds to the origin of replication (oriC) to initiate formation of the DNA replication initiation complex once per cell cycle. Binds the DnaA box (a 9 base pair repeat at the origin) and separates the double-stranded (ds)DNA. Forms a right-handed helical filament on oriC DNA; dsDNA binds to the exterior of the filament while single-stranded (ss)DNA is stabiized in the filament's interior. The ATP-DnaA-oriC complex binds and stabilizes one strand of the AT-rich DNA unwinding element (DUE), permitting loading of DNA polymerase. After initiation quickly degrades to an ADP-DnaA complex that is not apt for DNA replication. Binds acidic phospholipids. The polypeptide is Chromosomal replication initiator protein DnaA (Helicobacter pylori (strain P12)).